We begin with the raw amino-acid sequence, 930 residues long: Polypeptide N-acetylgalactosaminyltransferase 5 (930 aa).

The Cytoplasmic portion of the chain corresponds to 1–12 (MNKIRKFFRGSG). Residues 13–35 (RVLAFIFVASVIWLLFDMAALRL) traverse the membrane as a helical; Signal-anchor for type II membrane protein segment. Residues 36-930 (SFSEINTGIL…KWKFEKYYDV (895 aa)) lie on the Lumenal side of the membrane. The interval 163–210 (GSEKDSFTVSRGVPLNKTAEHTETLDKKQEAPENYNLSSDTSKQASQR) is disordered. Asparagine 178 carries N-linked (GlcNAc...) asparagine glycosylation. Residues 180–193 (TAEHTETLDKKQEA) are compositionally biased toward basic and acidic residues. Positions 197 to 210 (YNLSSDTSKQASQR) are enriched in polar residues. Residues asparagine 198 and asparagine 213 are each glycosylated (N-linked (GlcNAc...) asparagine). A Phosphoserine modification is found at serine 285. N-linked (GlcNAc...) asparagine glycosylation is found at asparagine 287 and asparagine 309. The disordered stretch occupies residues 344-377 (LGESQGKHIPRSQSQTLSSPLAPKRAVSQSKPTL). Asparagine 387 and asparagine 403 each carry an N-linked (GlcNAc...) asparagine glycan. 3 disulfides stabilise this stretch: cysteine 476–cysteine 708, cysteine 699–cysteine 779, and cysteine 812–cysteine 825. The segment at 485–594 (LPTTSIIMCF…VGWLEPLLER (110 aa)) is catalytic subdomain A. Residues aspartate 526 and arginine 555 each contribute to the substrate site. A glycan (N-linked (GlcNAc...) asparagine) is linked at asparagine 568. Aspartate 578 provides a ligand contact to Mn(2+). Residue serine 579 coordinates substrate. Histidine 580 is a binding site for Mn(2+). Residues 654–716 (IIRCPVMAGG…PCSRVGHIFR (63 aa)) form a catalytic subdomain B region. A substrate-binding site is contributed by tryptophan 685. Mn(2+) is bound at residue histidine 713. Arginine 716 and tyrosine 721 together coordinate substrate. N-linked (GlcNAc...) asparagine glycosylation is found at asparagine 766, asparagine 817, and asparagine 835. Residues 794-925 (KAPVVRASGV…TEPQQKWKFE (132 aa)) form the Ricin B-type lectin domain. Intrachain disulfides connect cysteine 848–cysteine 863 and cysteine 898–cysteine 913. N-linked (GlcNAc...) asparagine glycosylation is present at asparagine 902.

It belongs to the glycosyltransferase 2 family. GalNAc-T subfamily. In terms of assembly, interacts with EXT2. Does not interact with EXT1, EXTL1 or EXTL3. The cofactor is Mn(2+). As to expression, predominantly expressed in sublingual gland. Expressed at lower level in stomach and small intestine. Weakly or not expressed in submandibular gland, parotid gland, kidney, liver, heart, brain, spleen, lung, skeletal muscle, testis, ovary, cervix and uterus.

Its subcellular location is the golgi apparatus membrane. The catalysed reaction is L-seryl-[protein] + UDP-N-acetyl-alpha-D-galactosamine = a 3-O-[N-acetyl-alpha-D-galactosaminyl]-L-seryl-[protein] + UDP + H(+). The enzyme catalyses L-threonyl-[protein] + UDP-N-acetyl-alpha-D-galactosamine = a 3-O-[N-acetyl-alpha-D-galactosaminyl]-L-threonyl-[protein] + UDP + H(+). It participates in protein modification; protein glycosylation. In terms of biological role, catalyzes the initial reaction in O-linked oligosaccharide biosynthesis, the transfer of an N-acetyl-D-galactosamine residue to a serine or threonine residue on the protein receptor. Has activity toward EA2 peptide substrate, but has a weak activity toward Muc2, Muc1b, rMuc-2 or mG-Muc substrates. The sequence is that of Polypeptide N-acetylgalactosaminyltransferase 5 (Galnt5) from Rattus norvegicus (Rat).